Here is a 253-residue protein sequence, read N- to C-terminus: Vitamin B12 import ATP-binding protein BtuD (253 aa).

Residues methionine 1 to aspartate 236 enclose the ABC transporter domain. Glycine 34–serine 41 contacts ATP.

Belongs to the ABC transporter superfamily. Vitamin B12 importer (TC 3.A.1.13.1) family. In terms of assembly, the complex is composed of two ATP-binding proteins (BtuD), two transmembrane proteins (BtuC) and a solute-binding protein (BtuF).

The protein resides in the cell inner membrane. It carries out the reaction an R-cob(III)alamin(out) + ATP + H2O = an R-cob(III)alamin(in) + ADP + phosphate + H(+). Part of the ABC transporter complex BtuCDF involved in vitamin B12 import. Responsible for energy coupling to the transport system. In Photorhabdus laumondii subsp. laumondii (strain DSM 15139 / CIP 105565 / TT01) (Photorhabdus luminescens subsp. laumondii), this protein is Vitamin B12 import ATP-binding protein BtuD.